The chain runs to 383 residues: Succinyl-diaminopimelate desuccinylase (383 aa).

Position 68 (H68) interacts with Zn(2+). The active site involves D70. D100 provides a ligand contact to Zn(2+). The Proton acceptor role is filled by E130. Residues E131, E159, and H352 each coordinate Zn(2+).

It belongs to the peptidase M20A family. DapE subfamily. As to quaternary structure, homodimer. The cofactor is Zn(2+). It depends on Co(2+) as a cofactor.

The catalysed reaction is N-succinyl-(2S,6S)-2,6-diaminopimelate + H2O = (2S,6S)-2,6-diaminopimelate + succinate. It functions in the pathway amino-acid biosynthesis; L-lysine biosynthesis via DAP pathway; LL-2,6-diaminopimelate from (S)-tetrahydrodipicolinate (succinylase route): step 3/3. Functionally, catalyzes the hydrolysis of N-succinyl-L,L-diaminopimelic acid (SDAP), forming succinate and LL-2,6-diaminopimelate (DAP), an intermediate involved in the bacterial biosynthesis of lysine and meso-diaminopimelic acid, an essential component of bacterial cell walls. This chain is Succinyl-diaminopimelate desuccinylase, found in Granulibacter bethesdensis (strain ATCC BAA-1260 / CGDNIH1).